We begin with the raw amino-acid sequence, 405 residues long: Aspartokinase (405 aa).

Lysine 7–glycine 10 provides a ligand contact to ATP. Position 25–30 (arginine 25–arginine 30) interacts with substrate. An ATP-binding site is contributed by serine 41. Residues threonine 47–glutamate 49, glutamate 74, leucine 125–glutamate 126, arginine 150–serine 153, and serine 153 contribute to the substrate site. ATP contacts are provided by residues threonine 173 to aspartate 174, tyrosine 179 to histidine 184, and arginine 209. 2 consecutive ACT domains span residues isoleucine 263–valine 342 and isoleucine 344–alanine 405. Substrate contacts are provided by residues aspartate 270, alanine 288–aspartate 290, glutamine 294, valine 355–proline 356, asparagine 369–isoleucine 370, and serine 376–glutamate 377.

It belongs to the aspartokinase family. As to quaternary structure, tetramer consisting of 2 isoforms Alpha (catalytic and regulation) and of a homodimer of 2 isoforms Beta (regulation).

It catalyses the reaction L-aspartate + ATP = 4-phospho-L-aspartate + ADP. Its pathway is amino-acid biosynthesis; L-lysine biosynthesis via DAP pathway; (S)-tetrahydrodipicolinate from L-aspartate: step 1/4. The protein operates within amino-acid biosynthesis; L-methionine biosynthesis via de novo pathway; L-homoserine from L-aspartate: step 1/3. It functions in the pathway amino-acid biosynthesis; L-threonine biosynthesis; L-threonine from L-aspartate: step 1/5. Its function is as follows. Catalyzes the phosphorylation of the beta-carboxyl group of aspartic acid with ATP to yield 4-phospho-L-aspartate, which is involved in the branched biosynthetic pathway leading to the biosynthesis of amino acids lysine, threonine, isoleucine and methionine. The protein is Aspartokinase (ask) of Thermus thermophilus (strain ATCC BAA-163 / DSM 7039 / HB27).